The following is a 303-amino-acid chain: Dihydroorotate dehydrogenase B (NAD(+)), catalytic subunit (303 aa).

FMN-binding positions include Ser21 and 45–46 (KG). Substrate contacts are provided by residues Lys45 and 69-73 (NAVGL). Residues Asn99 and Asn127 each coordinate FMN. Asn127 is a substrate binding site. The active-site Nucleophile is the Cys130. FMN contacts are provided by Lys165 and Ile191. 192-193 (NT) contributes to the substrate binding site. Residues Gly217, 243 to 244 (GG), and 265 to 266 (GT) contribute to the FMN site.

This sequence belongs to the dihydroorotate dehydrogenase family. Type 1 subfamily. As to quaternary structure, heterotetramer of 2 PyrK and 2 PyrD type B subunits. Requires FMN as cofactor.

The protein resides in the cytoplasm. It carries out the reaction (S)-dihydroorotate + NAD(+) = orotate + NADH + H(+). It functions in the pathway pyrimidine metabolism; UMP biosynthesis via de novo pathway; orotate from (S)-dihydroorotate (NAD(+) route): step 1/1. In terms of biological role, catalyzes the conversion of dihydroorotate to orotate with NAD(+) as electron acceptor. The polypeptide is Dihydroorotate dehydrogenase B (NAD(+)), catalytic subunit (pyrD) (Bacteroides fragilis (strain ATCC 25285 / DSM 2151 / CCUG 4856 / JCM 11019 / LMG 10263 / NCTC 9343 / Onslow / VPI 2553 / EN-2)).